Here is a 156-residue protein sequence, read N- to C-terminus: Small ribosomal subunit protein uS7 (156 aa).

It belongs to the universal ribosomal protein uS7 family. Part of the 30S ribosomal subunit. Contacts proteins S9 and S11.

Functionally, one of the primary rRNA binding proteins, it binds directly to 16S rRNA where it nucleates assembly of the head domain of the 30S subunit. Is located at the subunit interface close to the decoding center, probably blocks exit of the E-site tRNA. In Azorhizobium caulinodans (strain ATCC 43989 / DSM 5975 / JCM 20966 / LMG 6465 / NBRC 14845 / NCIMB 13405 / ORS 571), this protein is Small ribosomal subunit protein uS7.